The primary structure comprises 1192 residues: Probable ATP-binding protein BrxC (1192 aa).

This sequence belongs to the BrxC family.

BREX systems (bacteriophage exclusion) provide immunity against bacteriophage. A core protein of a type 1 BREX system. This system allows phage adsorption but prevents phage DNA replication, without degradation of the phage DNA. Methylation of bacterial DNA by PglX probably guides self/non-self discrimination. When the brxA-brxB-brxC-pglX and pglZ-brxL operons are transformed into a susceptible B.subtilis strain (BEST7003) they confer resistance to bacteriophages SPbeta, SP16, Zeta, phi3T and SP02 and partial protection to phages SP01 and SP82G (these include lytic and temperate phage). They do not protect against phages phi105, rho10 or rho14. Additionally confers a very slight reduction in efficiency of plasmid transformation. This chain is Probable ATP-binding protein BrxC, found in Bacillus cereus (strain H3081.97).